Reading from the N-terminus, the 104-residue chain is Large ribosomal subunit protein uL24 (104 aa).

Belongs to the universal ribosomal protein uL24 family. Part of the 50S ribosomal subunit.

One of two assembly initiator proteins, it binds directly to the 5'-end of the 23S rRNA, where it nucleates assembly of the 50S subunit. In terms of biological role, one of the proteins that surrounds the polypeptide exit tunnel on the outside of the subunit. This is Large ribosomal subunit protein uL24 from Afipia carboxidovorans (strain ATCC 49405 / DSM 1227 / KCTC 32145 / OM5) (Oligotropha carboxidovorans).